A 299-amino-acid polypeptide reads, in one-letter code: Homoserine O-acetyltransferase (299 aa).

Cys-142 acts as the Acyl-thioester intermediate in catalysis. The substrate site is built by Lys-163 and Ser-192. His-235 serves as the catalytic Proton acceptor. The active site involves Glu-237. Arg-249 lines the substrate pocket.

This sequence belongs to the MetA family.

The protein localises to the cytoplasm. The enzyme catalyses L-homoserine + acetyl-CoA = O-acetyl-L-homoserine + CoA. Its pathway is amino-acid biosynthesis; L-methionine biosynthesis via de novo pathway; O-acetyl-L-homoserine from L-homoserine: step 1/1. Transfers an acetyl group from acetyl-CoA to L-homoserine, forming acetyl-L-homoserine. This chain is Homoserine O-acetyltransferase, found in Synechococcus elongatus (strain ATCC 33912 / PCC 7942 / FACHB-805) (Anacystis nidulans R2).